We begin with the raw amino-acid sequence, 628 residues long: Carbon monoxide dehydrogenase 1 (628 aa).

Residues cysteine 44, cysteine 52, cysteine 53, cysteine 56, cysteine 61, and cysteine 75 each contribute to the [4Fe-4S] cluster site. [Ni-4Fe-5S] cluster is bound by residues histidine 266, cysteine 302, cysteine 340, cysteine 448, cysteine 478, and cysteine 519.

Belongs to the Ni-containing carbon monoxide dehydrogenase family. Homodimer. It depends on [4Fe-4S] cluster as a cofactor. The cofactor is [Ni-4Fe-5S] cluster.

It carries out the reaction CO + 2 oxidized [2Fe-2S]-[ferredoxin] + H2O = 2 reduced [2Fe-2S]-[ferredoxin] + CO2 + 2 H(+). Functionally, CODH oxidizes carbon monoxide coupled, via CooF, to the reduction of a hydrogen cation by a hydrogenase (possibly CooH). The polypeptide is Carbon monoxide dehydrogenase 1 (cooS1) (Methanosarcina acetivorans (strain ATCC 35395 / DSM 2834 / JCM 12185 / C2A)).